A 339-amino-acid polypeptide reads, in one-letter code: Methionine synthase (339 aa).

His212, Cys214, and Cys295 together coordinate Zn(2+).

Belongs to the archaeal MetE family. Zn(2+) is required as a cofactor.

It functions in the pathway amino-acid biosynthesis; L-methionine biosynthesis via de novo pathway. In terms of biological role, catalyzes the transfer of a methyl group to L-homocysteine resulting in methionine formation. The physiological methyl donor is unknown. In Sulfolobus acidocaldarius (strain ATCC 33909 / DSM 639 / JCM 8929 / NBRC 15157 / NCIMB 11770), this protein is Methionine synthase.